The chain runs to 102 residues: Large ribosomal subunit protein bL21 (102 aa).

The protein belongs to the bacterial ribosomal protein bL21 family. As to quaternary structure, part of the 50S ribosomal subunit. Contacts protein L20.

Functionally, this protein binds to 23S rRNA in the presence of protein L20. This is Large ribosomal subunit protein bL21 from Arthrobacter sp. (strain FB24).